A 268-amino-acid chain; its full sequence is Urease accessory protein UreD (268 aa).

It belongs to the UreD family. As to quaternary structure, ureD, UreF and UreG form a complex that acts as a GTP-hydrolysis-dependent molecular chaperone, activating the urease apoprotein by helping to assemble the nickel containing metallocenter of UreC. The UreE protein probably delivers the nickel.

The protein resides in the cytoplasm. In terms of biological role, required for maturation of urease via the functional incorporation of the urease nickel metallocenter. The chain is Urease accessory protein UreD from Lysinibacillus sphaericus (strain C3-41).